Consider the following 78-residue polypeptide: Defensin-like protein 149 (78 aa).

The first 25 residues, 1–25 (MMKKLIQLSFTVMIIFTILVLGVVA), serve as a signal peptide directing secretion. 4 disulfides stabilise this stretch: cysteine 36/cysteine 77, cysteine 45/cysteine 65, cysteine 50/cysteine 71, and cysteine 54/cysteine 73.

It belongs to the DEFL family.

It localises to the secreted. This is Defensin-like protein 149 (LCR5) from Arabidopsis thaliana (Mouse-ear cress).